Here is a 544-residue protein sequence, read N- to C-terminus: MNRIKILPETIVGKISAGEVVERPASVVKELIENSIDAGANSISVYIKEFGIAEIKVIDDGEGIPSDDVILAFQRHATSKIKDEKDLQRISSLGFRGEALYSIANVSKLKIITQYKDEDTGTEVYLTGGNLVSQKPVVTKGTTVEIRDLFFNTPVRRKFLKSSYTEKAHIIETVQNYCLAYPEISFSLFIDREEVLNIPQVKTLYDRISQVFGLEFTEKLKFKTISKDNYKIELFLGGEELLRKSKGRQLIFVNRRPVKDFSIVNTIYKAFHINENHPQFFIFINLPPEDVDFNVHPAKKEVRFREPQIIHQLIFRMSEYQVKSSMIAEETNQWKVNADLSSISQISAFYTESIFNKEEIFHFFSIGDAIVVIQRVDGIVFLDFHAAHERVNFEKILNKMSEQIVKLTFPHVINLNPQDYVLIKENLHILNELGIEAEDFGENSIVIRALPEIIKYIDIAGMIENIALTLKEGTSTPDFIEIKRKIAATIACHSSLRANEKINHFEIKALLQELERTSDPEHCPHGRPVRKFISLDEIKKWFLR.

This sequence belongs to the DNA mismatch repair MutL/HexB family.

Its function is as follows. This protein is involved in the repair of mismatches in DNA. It is required for dam-dependent methyl-directed DNA mismatch repair. May act as a 'molecular matchmaker', a protein that promotes the formation of a stable complex between two or more DNA-binding proteins in an ATP-dependent manner without itself being part of a final effector complex. The protein is DNA mismatch repair protein MutL of Thermodesulfovibrio yellowstonii (strain ATCC 51303 / DSM 11347 / YP87).